The primary structure comprises 410 residues: Interleukin-1 receptor type 2 (410 aa).

The first 13 residues, 1–13 (MFILLVLVTGVSA), serve as a signal peptide directing secretion. The Extracellular segment spans residues 14-355 (FTTPTVVHTG…SQSLHTTVKE (342 aa)). Ig-like C2-type domains lie at 35–136 (PTVH…VELK), 146–237 (PHVS…RNIE), and 249–357 (PVII…KEVS). Disulfide bonds link Cys-42/Cys-128, Cys-64/Cys-120, and Cys-164/Cys-219. Residues Asn-124, Asn-208, Asn-231, and Asn-289 are each glycosylated (N-linked (GlcNAc...) asparagine). Cys-270 and Cys-338 are disulfide-bonded. Residues 356–381 (VSSTFSWSIALAPLSLIILVVGAIWM) form a helical membrane-spanning segment. Over 382–410 (RRRCKRRAGKTYGLTKLRTDNQDFPSSPN) the chain is Cytoplasmic.

This sequence belongs to the interleukin-1 receptor family. In terms of assembly, associates with IL1RAP to form a non-signaling interleukin-1 receptor complex. A soluble form (sIL1R2) can also be produced by proteolytic cleavage at the cell surface (shedding) involving a metalloproteinase. Strongly expressed in B-cells, with levels 21 times higher than IL1R1. In T-cells expressed 5 times more compared with IL1R1.

It localises to the membrane. Its subcellular location is the cell membrane. It is found in the secreted. Its function is as follows. Non-signaling receptor for IL1A, IL1B and IL1RN. Reduces IL1B activities. Serves as a decoy receptor by competitive binding to IL1B and preventing its binding to IL1R1. Also modulates cellular response through non-signaling association with IL1RAP after binding to IL1B. IL1R2 (membrane and secreted forms) preferentially binds IL1B and poorly IL1A and IL1RN. The secreted IL1R2 recruits secreted IL1RAP with high affinity; this complex formation may be the dominant mechanism for neutralization of IL1B by secreted/soluble receptors. This chain is Interleukin-1 receptor type 2 (Il1r2), found in Mus musculus (Mouse).